The chain runs to 356 residues: Dual-specificity RNA methyltransferase RlmN (356 aa).

Glutamate 89 serves as the catalytic Proton acceptor. A Radical SAM core domain is found at 108 to 341 (SHARYTICVS…CTIRESKGLD (234 aa)). A disulfide bridge links cysteine 115 with cysteine 346. Cysteine 122, cysteine 126, and cysteine 129 together coordinate [4Fe-4S] cluster. S-adenosyl-L-methionine is bound by residues 172–173 (GE), serine 204, 227–229 (SLH), and asparagine 303. Cysteine 346 acts as the S-methylcysteine intermediate in catalysis.

This sequence belongs to the radical SAM superfamily. RlmN family. [4Fe-4S] cluster serves as cofactor.

The protein resides in the cytoplasm. It carries out the reaction adenosine(2503) in 23S rRNA + 2 reduced [2Fe-2S]-[ferredoxin] + 2 S-adenosyl-L-methionine = 2-methyladenosine(2503) in 23S rRNA + 5'-deoxyadenosine + L-methionine + 2 oxidized [2Fe-2S]-[ferredoxin] + S-adenosyl-L-homocysteine. The catalysed reaction is adenosine(37) in tRNA + 2 reduced [2Fe-2S]-[ferredoxin] + 2 S-adenosyl-L-methionine = 2-methyladenosine(37) in tRNA + 5'-deoxyadenosine + L-methionine + 2 oxidized [2Fe-2S]-[ferredoxin] + S-adenosyl-L-homocysteine. Specifically methylates position 2 of adenine 2503 in 23S rRNA and position 2 of adenine 37 in tRNAs. m2A2503 modification seems to play a crucial role in the proofreading step occurring at the peptidyl transferase center and thus would serve to optimize ribosomal fidelity. The polypeptide is Dual-specificity RNA methyltransferase RlmN (Campylobacter jejuni subsp. jejuni serotype O:23/36 (strain 81-176)).